A 660-amino-acid chain; its full sequence is MRADRQSTAKLRPSLHAVIQTGNLNAFNFTVEGVDCPTPADLSRYCVANGWFFKIGNQVIIPVLRNFPAFNYNTDIGRFTSFPFETLEDVTKLHDLANGDLVPHFAFVEDGSPVVAAICDRHDNVVTLRFRDSGGRIITVEELLAGEQRDLNLYQGLDQLADEAGIRPEDIDQAALAAQAVADAGGGVAQQQAAAAAAGVQAQEDLPVGREDELRPEDVADARGQAAAPPQAQAPAPPDAALQRQREQAILRQVPNLHVLPQPRQQLIDRLAQVREAEQKFINEMIQEVGVIEQQRDVAAAGMRLELCRSVHRVDGILRAYQERVNPFRLGLNYRPPILLEEEIRVEENARRLGGEIGLHDFEIAERPERALLHAEYLGNLMHVEQEKLLTTGRTFVAHIHQAGYCNPEGWCCLQDVEVQVQGIEPESLLPALAVRTNCRGLVLRAPLPIIRVLTQIIHHPSGLDRLEATLNVLLTDMRERVSTLTTADSTRRIRVNDAHDLAAMTAPLGHVYAMLSRWRDNVARLRASAQHQLIAQELARKYAEWRPGQHYTIPGRVLNLFANRQLRYQSQLEWVYPHLWIADRNLAGAWILNGVVPTYRNLGEWVPDIAFIGLVQFLEFWEEFVTWFPHYGVGPINRGVPVFPTVFSPRMSSLAVRLL.

The disordered stretch occupies residues 220-239; sequence ADARGQAAAPPQAQAPAPPD. A compositionally biased stretch (low complexity) spans 222–239; it reads ARGQAAAPPQAQAPAPPD.

This is an uncharacterized protein from Callospermophilus lateralis (Golden-mantled ground squirrel).